The primary structure comprises 309 residues: Homoserine O-succinyltransferase (309 aa).

The active-site Acyl-thioester intermediate is cysteine 142. 2 residues coordinate substrate: lysine 163 and serine 192. Catalysis depends on histidine 235, which acts as the Proton acceptor. Glutamate 237 is a catalytic residue. Substrate is bound at residue arginine 249.

It belongs to the MetA family.

It is found in the cytoplasm. It catalyses the reaction L-homoserine + succinyl-CoA = O-succinyl-L-homoserine + CoA. Its pathway is amino-acid biosynthesis; L-methionine biosynthesis via de novo pathway; O-succinyl-L-homoserine from L-homoserine: step 1/1. Functionally, transfers a succinyl group from succinyl-CoA to L-homoserine, forming succinyl-L-homoserine. This is Homoserine O-succinyltransferase from Pectobacterium carotovorum subsp. carotovorum (strain PC1).